We begin with the raw amino-acid sequence, 160 residues long: MLRIGNGYDVHKLVEGRKLMLGGVEVPHTKGVLGHSDGDVLLHAITDAIIGALGLGDIGLHFPDNDENLKDIDSAILLKKINNIMKEKNYKIVNLDSIIVMQKPKLRPYIDSIRDNIAKILEINSELINVKAKTEEKLGFTGDETGVKSYCVVLLEKKKC.

The a divalent metal cation site is built by aspartate 9 and histidine 11. 4-CDP-2-C-methyl-D-erythritol 2-phosphate contacts are provided by residues 9–11 (DVH) and 35–36 (HS). Position 43 (histidine 43) interacts with a divalent metal cation. 4-CDP-2-C-methyl-D-erythritol 2-phosphate-binding positions include 57–59 (DIG), 62–66 (FPDND), and phenylalanine 140.

Belongs to the IspF family. As to quaternary structure, homotrimer. It depends on a divalent metal cation as a cofactor.

It carries out the reaction 4-CDP-2-C-methyl-D-erythritol 2-phosphate = 2-C-methyl-D-erythritol 2,4-cyclic diphosphate + CMP. It participates in isoprenoid biosynthesis; isopentenyl diphosphate biosynthesis via DXP pathway; isopentenyl diphosphate from 1-deoxy-D-xylulose 5-phosphate: step 4/6. Its function is as follows. Involved in the biosynthesis of isopentenyl diphosphate (IPP) and dimethylallyl diphosphate (DMAPP), two major building blocks of isoprenoid compounds. Catalyzes the conversion of 4-diphosphocytidyl-2-C-methyl-D-erythritol 2-phosphate (CDP-ME2P) to 2-C-methyl-D-erythritol 2,4-cyclodiphosphate (ME-CPP) with a corresponding release of cytidine 5-monophosphate (CMP). This is 2-C-methyl-D-erythritol 2,4-cyclodiphosphate synthase from Fusobacterium nucleatum subsp. nucleatum (strain ATCC 25586 / DSM 15643 / BCRC 10681 / CIP 101130 / JCM 8532 / KCTC 2640 / LMG 13131 / VPI 4355).